The primary structure comprises 128 residues: Ribosome-binding factor A (128 aa).

This sequence belongs to the RbfA family. In terms of assembly, monomer. Binds 30S ribosomal subunits, but not 50S ribosomal subunits or 70S ribosomes.

The protein resides in the cytoplasm. Its function is as follows. One of several proteins that assist in the late maturation steps of the functional core of the 30S ribosomal subunit. Associates with free 30S ribosomal subunits (but not with 30S subunits that are part of 70S ribosomes or polysomes). Required for efficient processing of 16S rRNA. May interact with the 5'-terminal helix region of 16S rRNA. This chain is Ribosome-binding factor A, found in Saccharophagus degradans (strain 2-40 / ATCC 43961 / DSM 17024).